Reading from the N-terminus, the 374-residue chain is tRNA-specific 2-thiouridylase MnmA (374 aa).

ATP-binding positions include 13 to 20 and Met-39; that span reads GMSGGVDS. Positions 99-101 are interaction with target base in tRNA; the sequence is NPD. Catalysis depends on Cys-104, which acts as the Nucleophile. Cys-104 and Cys-201 are oxidised to a cystine. ATP is bound at residue Gly-128. The tract at residues 151–153 is interaction with tRNA; the sequence is KDQ. Cys-201 functions as the Cysteine persulfide intermediate in the catalytic mechanism. The interval 313 to 314 is interaction with tRNA; it reads RY.

This sequence belongs to the MnmA/TRMU family.

Its subcellular location is the cytoplasm. It catalyses the reaction S-sulfanyl-L-cysteinyl-[protein] + uridine(34) in tRNA + AH2 + ATP = 2-thiouridine(34) in tRNA + L-cysteinyl-[protein] + A + AMP + diphosphate + H(+). In terms of biological role, catalyzes the 2-thiolation of uridine at the wobble position (U34) of tRNA, leading to the formation of s(2)U34. The sequence is that of tRNA-specific 2-thiouridylase MnmA from Streptococcus equi subsp. zooepidemicus (strain H70).